A 361-amino-acid chain; its full sequence is mRNA export factor ICP27 homolog (361 aa).

A compositionally biased stretch (low complexity) spans 1 to 15 (MEDSGNSSGSEASRS). The segment at 1–107 (MEDSGNSSGS…SESARAAVSA (107 aa)) is disordered. Over residues 16-36 (GSEERRPVRERLGSRPPERRP) the composition is skewed to basic and acidic residues. The interval 45 to 54 (RRRRGGRGGR) is RGG-box. Residues 80–99 (RQEADRPDGGPDAPPDRLSE) are compositionally biased toward basic and acidic residues. The Zn(2+) site is built by cysteine 253, histidine 328, cysteine 332, and cysteine 337. A CHC2-type zinc finger spans residues 253–337 (CYLRDTPVDE…HKTGCDAPTC (85 aa)).

Belongs to the HHV-1 ICP27 protein family. Homodimer. Homodimerization is required for transactivation. Associates in a complex with RNA, and host export factors NXF1/TAP and ALYREF; these interactions allow nuclear export of viral transcripts. Interacts with three host shuttling SR proteins SRSF1, SRSF3 and SRSF7. Interacts with host SRPK1. Interacts with IE62; this interaction enhances IE62 transactivation.

It is found in the host cytoplasm. It localises to the host nucleus. Functionally, multifunctional regulator of the expression of viral genes that mediates nuclear export of viral intronless mRNAs. This immediate early (EI) protein promotes the nuclear export of viral intronless mRNAs by interacting with mRNAs and host NXF1/TAP. The chain is mRNA export factor ICP27 homolog from Suid herpesvirus 1 (strain Kaplan) (SuHV-1).